We begin with the raw amino-acid sequence, 133 residues long: DQDCLPGWSFYEGHCYKVFNLDKTWEDAEKFCTEQANSGHLVSIDSKKEANFVAELVSQNIKETRRTDFVWIGLRAEDKRQHCSSEWSDGSSINYQNWIEAESKKCLGLEKQTRYRKWVNLNCGQPYRFTCEI.

3 disulfides stabilise this stretch: C4–C15, C32–C131, and C106–C123. The region spanning 11–132 (YEGHCYKVFN…CGQPYRFTCE (122 aa)) is the C-type lectin domain.

The protein belongs to the snaclec family. In terms of assembly, heterodimer; disulfide-linked. In terms of tissue distribution, expressed by the venom gland.

It localises to the secreted. Functionally, interferes with one step of hemostasis (modulation of platelet aggregation, or coagulation cascade, for example). The polypeptide is Snaclec A9 (Macrovipera lebetinus (Levantine viper)).